A 460-amino-acid polypeptide reads, in one-letter code: A-type ATP synthase subunit B (460 aa).

Belongs to the ATPase alpha/beta chains family. In terms of assembly, has multiple subunits, A(3), B(3), C, D, E, F, G, I and K(x); there may be a few other subunits as well.

Its subcellular location is the cell membrane. Component of the A-type ATP synthase that produces ATP from ADP in the presence of a proton gradient across the membrane. The B chain is a regulatory subunit. In Methanosarcina mazei (strain ATCC BAA-159 / DSM 3647 / Goe1 / Go1 / JCM 11833 / OCM 88) (Methanosarcina frisia), this protein is A-type ATP synthase subunit B.